We begin with the raw amino-acid sequence, 222 residues long: N-acetyltransferase 8 (222 aa).

The Cytoplasmic portion of the chain corresponds to 1 to 35; sequence MASFHIRQFQERDYEQVVDMFSRGMKEHIPTAFRH. The helical; Signal-anchor for type II membrane protein transmembrane segment at 36–56 threads the bilayer; the sequence is LLLLPRTLLLLLGVPLALVLV. Residues 57-222 lie on the Lumenal side of the membrane; the sequence is SGSWLLAVVC…IHFIYPLPSS (166 aa). One can recognise an N-acetyltransferase domain in the interval 62–217; that stretch reads LAVVCIFFLL…VDVSLIHFIY (156 aa).

The protein belongs to the NAT8 family.

The protein resides in the endoplasmic reticulum-Golgi intermediate compartment membrane. The protein localises to the endoplasmic reticulum membrane. The enzyme catalyses L-lysyl-[protein] + acetyl-CoA = N(6)-acetyl-L-lysyl-[protein] + CoA + H(+). It carries out the reaction an S-substituted L-cysteine + acetyl-CoA = an N-acetyl-L-cysteine-S-conjugate + CoA + H(+). The protein operates within sulfur metabolism; glutathione metabolism. Functionally, endoplasmic reticulum-membrane(ER)-bound lysine N-acetyltransferase catalyzing the N6-acetylation of lysine residues in the lumen of the ER in various proteins, including PROM1 and BACE1, using acetyl-CoA as acetyl donor. Thereby, may regulate apoptosis through the acetylation and the regulation of the expression of PROM1. May also regulate amyloid beta-peptide secretion through acetylation of BACE1 and the regulation of its expression in neurons. N(6)-lysine acetylation in the ER maintains protein homeostasis and regulates reticulophagy. Alternatively, acetylates the free alpha-amino group of cysteine S-conjugates to form mercapturic acids. This is the final step in a major route for detoxification of a wide variety of reactive electrophiles which starts with their incorporation into glutathione S-conjugates. The glutathione S-conjugates are then further processed into cysteine S-conjugates and finally mercapturic acids which are water soluble and can be readily excreted in urine or bile. The sequence is that of N-acetyltransferase 8 (Nat8) from Rattus norvegicus (Rat).